The chain runs to 332 residues: dTDP-3,4-didehydro-2,6-dideoxy-alpha-D-glucose 3-reductase (332 aa).

NADP(+) is bound at residue C12–R18. R19 contributes to the substrate binding site. Residues S37–R38, Y58, L74, and H79 contribute to the NADP(+) site. K97 acts as the Proton donor in catalysis. NADP(+) is bound by residues R165 and D177. Residues Y235 and T255 each coordinate substrate.

The protein belongs to the Gfo/Idh/MocA family. In terms of assembly, monomer.

It carries out the reaction dTDP-4-dehydro-2,6-dideoxy-alpha-D-glucose + NADP(+) = dTDP-3,4-didehydro-2,6-dideoxy-alpha-D-glucose + NADPH + H(+). Its function is as follows. Involved in the biosynthesis of forosamine ((4-dimethylamino)-2,3,4,6-tetradeoxy-alpha-D-threo-hexopyranose), a highly deoxygenated sugar component of several bioactive natural products such as the insecticidal spinosyns A and D. Catalyzes the reduction of the C-3 keto moiety of dTDP-3,4-diketo-2,6-dideoxy-alpha-D-glucose to yield dTDP-4-keto-2,6-dideoxy-alpha-D-glucose. NADPH is the better reductant, however NADH can also be used. The sequence is that of dTDP-3,4-didehydro-2,6-dideoxy-alpha-D-glucose 3-reductase from Saccharopolyspora spinosa.